Here is a 459-residue protein sequence, read N- to C-terminus: Exodeoxyribonuclease 7 large subunit (459 aa).

This sequence belongs to the XseA family. In terms of assembly, heterooligomer composed of large and small subunits.

Its subcellular location is the cytoplasm. The enzyme catalyses Exonucleolytic cleavage in either 5'- to 3'- or 3'- to 5'-direction to yield nucleoside 5'-phosphates.. Its function is as follows. Bidirectionally degrades single-stranded DNA into large acid-insoluble oligonucleotides, which are then degraded further into small acid-soluble oligonucleotides. The protein is Exodeoxyribonuclease 7 large subunit of Pseudomonas syringae pv. tomato (strain ATCC BAA-871 / DC3000).